A 1761-amino-acid chain; its full sequence is Lysine-specific demethylase 3B (1761 aa).

An N-acetylalanine modification is found at alanine 2. The disordered stretch occupies residues 253–346; sequence DNSAPQSEGG…QRAKQPPSTF (94 aa). The segment covering 298 to 309 has biased composition (basic and acidic residues); that stretch reads ASKKLKGDRGEV. Lysine 361 is subject to N6-acetyllysine. Disordered stretches follow at residues 370–394 and 438–496; these read QDEP…QTPL and DTGL…NGVL. Polar residues-rich tracts occupy residues 380–392, 453–468, and 477–495; these read ASFT…TGQT, SRSQ…SILA, and PSSS…SNGV. Phosphoserine is present on residues serine 492, serine 546, serine 556, and serine 560. The disordered stretch occupies residues 572–603; it reads RSVLGTDTKPGSKAGSSVDRKVPAESMPTLTP. Threonine 614 carries the phosphothreonine modification. The tract at residues 714–762 is disordered; it reads GPSLSAMGNGRSSSPTSSLTQPIEMPTLSSSPTEERPTVGPGQQDNPLL. A compositionally biased stretch (polar residues) spans 723–745; the sequence is GRSSSPTSSLTQPIEMPTLSSSP. Phosphoserine occurs at positions 766, 773, 778, and 779. A Glycyl lysine isopeptide (Lys-Gly) (interchain with G-Cter in SUMO2) cross-link involves residue lysine 788. Position 798 is a phosphoserine (serine 798). Positions 805–827 are disordered; sequence ACRQDSDSSTNSDLSDLSDSEEQ. A C6-type zinc finger spans residues 1031 to 1056; that stretch reads CDVCETTLFNIHWVCRKCGFGVCLDC. Residues 1142–1161 are compositionally biased toward polar residues; that stretch reads GMSQLPSINPSASSGNETTF. The segment at 1142 to 1220 is disordered; the sequence is GMSQLPSINP…PCPDTAPPSS (79 aa). Residues 1174–1193 show a composition bias toward basic and acidic residues; the sequence is EPDHVPKADSTDIRSEEPLK. Positions 1194-1204 are enriched in polar residues; it reads TDSSASNSNSE. A phosphoserine mark is found at serine 1253 and serine 1259. An LXXLL motif motif is present at residues 1293–1297; the sequence is LRDLL. Positions 1498-1721 constitute a JmjC domain; sequence MPTRFEDLME…HCFRLTQEFR (224 aa). Fe cation contacts are provided by histidine 1560, aspartate 1562, and histidine 1689.

This sequence belongs to the JHDM2 histone demethylase family. The cofactor is Fe(2+). As to expression, ubiquitous. Highly expressed in placenta, skeletal muscle, kidney, heart and liver.

Its subcellular location is the nucleus. It catalyses the reaction N(6),N(6)-dimethyl-L-lysyl(9)-[histone H3] + 2 2-oxoglutarate + 2 O2 = L-lysyl(9)-[histone H3] + 2 formaldehyde + 2 succinate + 2 CO2. Histone demethylase that specifically demethylates 'Lys-9' of histone H3, thereby playing a central role in histone code. Demethylation of Lys residue generates formaldehyde and succinate. May have tumor suppressor activity. This chain is Lysine-specific demethylase 3B (KDM3B), found in Homo sapiens (Human).